Reading from the N-terminus, the 629-residue chain is Iron multicopper oxidase fer1 (629 aa).

The first 29 residues, 1 to 29 (MVAPQRRTVMPALGLLASSLCSLLLTANA), serve as a signal peptide directing secretion. Plastocyanin-like domains are found at residues 44-164 (VNPD…IHPD) and 175-338 (DDYT…TISY). 2 N-linked (GlcNAc...) asparagine glycosylation sites follow: Asn-58 and Asn-69. Positions 91 and 93 each coordinate Cu cation. The N-linked (GlcNAc...) asparagine glycan is linked to Asn-98. Positions 144 and 146 each coordinate Cu cation. Asn-188, Asn-222, Asn-236, Asn-253, Asn-303, Asn-331, and Asn-398 each carry an N-linked (GlcNAc...) asparagine glycan. The Plastocyanin-like 3 domain occupies 401 to 537 (YVAPQVPALF…LASIFIEAPD (137 aa)). Cu cation contacts are provided by His-452, His-455, and His-457. An N-linked (GlcNAc...) asparagine glycan is attached at Asn-482. Cu cation contacts are provided by His-517, Cys-518, His-519, and His-523. An N-linked (GlcNAc...) asparagine glycan is attached at Asn-569. The chain crosses the membrane as a helical span at residues 592 to 612 (AIAAFTGCIITGLLGLATVVV).

The protein belongs to the multicopper oxidase family. Requires Cu cation as cofactor.

The protein resides in the cell membrane. Iron transport multicopper oxidase, which is required for Fe(2+) high affinity uptake. May be required to oxidize Fe(2+) and release it from the transporter. Essential component of copper-dependent iron transport. This is Iron multicopper oxidase fer1 from Mycosarcoma maydis (Corn smut fungus).